A 616-amino-acid chain; its full sequence is uncharacterized protein (616 aa).

This sequence belongs to the UbiD family.

This is an uncharacterized protein from Helicobacter pylori (strain ATCC 700392 / 26695) (Campylobacter pylori).